Consider the following 491-residue polypeptide: UDP-N-acetylmuramate--L-alanine ligase (491 aa).

126 to 132 (GTHGKTT) lines the ATP pocket.

Belongs to the MurCDEF family.

It localises to the cytoplasm. It catalyses the reaction UDP-N-acetyl-alpha-D-muramate + L-alanine + ATP = UDP-N-acetyl-alpha-D-muramoyl-L-alanine + ADP + phosphate + H(+). It functions in the pathway cell wall biogenesis; peptidoglycan biosynthesis. Cell wall formation. This is UDP-N-acetylmuramate--L-alanine ligase from Shigella flexneri serotype 5b (strain 8401).